Consider the following 441-residue polypeptide: Xylose isomerase 1 (441 aa).

Catalysis depends on residues His-105 and Asp-108. Mg(2+)-binding residues include Glu-236, Glu-272, His-275, Asp-300, Asp-311, Asp-313, and Asp-343.

The protein belongs to the xylose isomerase family. Homotetramer. Mg(2+) is required as a cofactor.

Its subcellular location is the cytoplasm. The enzyme catalyses alpha-D-xylose = alpha-D-xylulofuranose. This is Xylose isomerase 1 (xylA1) from Xanthomonas axonopodis pv. citri (strain 306).